Here is a 106-residue protein sequence, read N- to C-terminus: Urease subunit beta (106 aa).

The protein belongs to the urease beta subunit family. Heterotrimer of UreA (gamma), UreB (beta) and UreC (alpha) subunits. Three heterotrimers associate to form the active enzyme.

Its subcellular location is the cytoplasm. It carries out the reaction urea + 2 H2O + H(+) = hydrogencarbonate + 2 NH4(+). It participates in nitrogen metabolism; urea degradation; CO(2) and NH(3) from urea (urease route): step 1/1. In Prochlorococcus marinus (strain MIT 9215), this protein is Urease subunit beta.